Reading from the N-terminus, the 301-residue chain is Ribosomal RNA small subunit methyltransferase H (301 aa).

Residues 31-33 (GGY), D49, F76, D97, and Q104 each bind S-adenosyl-L-methionine.

It belongs to the methyltransferase superfamily. RsmH family.

It is found in the cytoplasm. The catalysed reaction is cytidine(1402) in 16S rRNA + S-adenosyl-L-methionine = N(4)-methylcytidine(1402) in 16S rRNA + S-adenosyl-L-homocysteine + H(+). Functionally, specifically methylates the N4 position of cytidine in position 1402 (C1402) of 16S rRNA. The chain is Ribosomal RNA small subunit methyltransferase H from Ehrlichia ruminantium (strain Welgevonden).